The sequence spans 496 residues: SRCTHLENRDFVTGTQGTTRVTLVLELGGCVTITAEGKPSVDVWLDAIYQESPAKTREYCLHAKLSETKVAARCPTMGPAALAEERQIGTVCKRDQSDRGWGNHCGLFGKGSIVACVKAACEAKKKATGYVYDANKIVYTVKVEPHTGDYVAANETHKGRKTATFTVSSEKTILTLGEYGDVSLLCRVASGVDLAQTIILELDKTAEHLPTAWQVHRDWFNDLALPWKHEGNPHWNNAERLVEFGAPHAVKMDVYNLGDQTGVLLKALAGVPVAHIEGNKYHLKSGHVTCEVGLEKLKMKGLTYTMCDKSKFAWKRTPTDSGHDTVVMEVTFSGSKPCRIPVRAVAHGSPDVNVAMLITPNPTIENDGGGFIEMQLPPGDNIIYVGELSHQWFQTGSSIGRVFQKTRKGIERLTVIGEHAWDFGSAGGFFSSIGKAVHTVLGGAFNSIFGGVGFLPKLLMGVALAWLGLNTRNPTMSISFLLTGGLVLAMTLGVGA.

Residues 1–447 (SRCTHLENRD…HTVLGGAFNS (447 aa)) lie on the Extracellular side of the membrane. 6 disulfide bridges follow: C3–C30, C60–C116, C60–C121, C74–C105, C92–C116, and C92–C121. Positions 98 to 111 (DRGWGNHCGLFGKG) are fusion peptide. The N-linked (GlcNAc...) asparagine; by host glycan is linked to N154. 2 disulfide bridges follow: C186–C290 and C307–C338. The chain crosses the membrane as a helical span at residues 448–468 (IFGGVGFLPKLLMGVALAWLG). Over 469-479 (LNTRNPTMSIS) the chain is Cytoplasmic. The helical transmembrane segment at 480-496 (FLLTGGLVLAMTLGVGA) threads the bilayer.

In terms of assembly, homodimer; in the endoplasmic reticulum and Golgi. In terms of processing, N-glycosylated.

Its subcellular location is the virion membrane. It is found in the host endoplasmic reticulum membrane. In terms of biological role, binds to host cell surface receptor and mediates fusion between viral and cellular membranes. Envelope protein is synthesized in the endoplasmic reticulum in the form of heterodimer with protein prM. They play a role in virion budding in the ER, and the newly formed immature particle is covered with 60 spikes composed of heterodimer between precursor prM and envelope protein E. The virion is transported to the Golgi apparatus where the low pH causes dissociation of PrM-E heterodimers and formation of E homodimers. prM-E cleavage is ineficient, and many virions are only partially matured. These uncleaved prM would play a role in immune evasion. The polypeptide is Genome polyprotein (Louping ill virus (strain SB 526) (Li)).